The following is a 545-amino-acid chain: CTP synthase (545 aa).

Residues 1–266 (MATNYIFVTG…DTFVCDRFRL (266 aa)) form an amidoligase domain region. Ser-14 is a CTP binding site. Ser-14 provides a ligand contact to UTP. ATP contacts are provided by residues 15–20 (SLGKGI) and Asp-72. Mg(2+) is bound by residues Asp-72 and Glu-140. Residues 147–149 (DIE), 187–192 (KTKPTQ), and Lys-223 each bind CTP. Residues 187 to 192 (KTKPTQ) and Lys-223 contribute to the UTP site. Position 239–241 (239–241 (KDV)) interacts with ATP. A Glutamine amidotransferase type-1 domain is found at 291-542 (TIGMVGKYVE…VKAAKDYQDS (252 aa)). Gly-352 is an L-glutamine binding site. Cys-379 functions as the Nucleophile; for glutamine hydrolysis in the catalytic mechanism. L-glutamine is bound by residues 380 to 383 (LGMQ), Glu-403, and Arg-470. Catalysis depends on residues His-515 and Glu-517.

Belongs to the CTP synthase family. Homotetramer.

It carries out the reaction UTP + L-glutamine + ATP + H2O = CTP + L-glutamate + ADP + phosphate + 2 H(+). The catalysed reaction is L-glutamine + H2O = L-glutamate + NH4(+). It catalyses the reaction UTP + NH4(+) + ATP = CTP + ADP + phosphate + 2 H(+). The protein operates within pyrimidine metabolism; CTP biosynthesis via de novo pathway; CTP from UDP: step 2/2. Its activity is regulated as follows. Allosterically activated by GTP, when glutamine is the substrate; GTP has no effect on the reaction when ammonia is the substrate. The allosteric effector GTP functions by stabilizing the protein conformation that binds the tetrahedral intermediate(s) formed during glutamine hydrolysis. Inhibited by the product CTP, via allosteric rather than competitive inhibition. Its function is as follows. Catalyzes the ATP-dependent amination of UTP to CTP with either L-glutamine or ammonia as the source of nitrogen. Regulates intracellular CTP levels through interactions with the four ribonucleotide triphosphates. This Actinobacillus pleuropneumoniae serotype 7 (strain AP76) protein is CTP synthase.